The primary structure comprises 276 residues: Dermonecrotic toxin LafSicTox-betaIE2 (276 aa).

The active site involves histidine 5. Mg(2+) is bound by residues glutamate 25 and aspartate 27. The active-site Nucleophile is the histidine 41. Intrachain disulfides connect cysteine 45–cysteine 51 and cysteine 47–cysteine 189. Aspartate 85 serves as a coordination point for Mg(2+).

It belongs to the arthropod phospholipase D family. Class II subfamily. Mg(2+) is required as a cofactor. In terms of tissue distribution, expressed by the venom gland.

It is found in the secreted. The catalysed reaction is an N-(acyl)-sphingosylphosphocholine = an N-(acyl)-sphingosyl-1,3-cyclic phosphate + choline. It catalyses the reaction an N-(acyl)-sphingosylphosphoethanolamine = an N-(acyl)-sphingosyl-1,3-cyclic phosphate + ethanolamine. The enzyme catalyses a 1-acyl-sn-glycero-3-phosphocholine = a 1-acyl-sn-glycero-2,3-cyclic phosphate + choline. It carries out the reaction a 1-acyl-sn-glycero-3-phosphoethanolamine = a 1-acyl-sn-glycero-2,3-cyclic phosphate + ethanolamine. Its function is as follows. Dermonecrotic toxins cleave the phosphodiester linkage between the phosphate and headgroup of certain phospholipids (sphingolipid and lysolipid substrates), forming an alcohol (often choline) and a cyclic phosphate. This toxin acts on sphingomyelin (SM). It may also act on ceramide phosphoethanolamine (CPE), lysophosphatidylcholine (LPC) and lysophosphatidylethanolamine (LPE), but not on lysophosphatidylserine (LPS), and lysophosphatidylglycerol (LPG). It acts by transphosphatidylation, releasing exclusively cyclic phosphate products as second products. Induces dermonecrosis, hemolysis, increased vascular permeability, edema, inflammatory response, and platelet aggregation. The polypeptide is Dermonecrotic toxin LafSicTox-betaIE2 (Loxosceles aff. spinulosa (strain GJB-2008) (Recluse spider)).